A 189-amino-acid polypeptide reads, in one-letter code: UPF0200 protein Smar_1234 (189 aa).

10 to 17 (GMPGAGKS) serves as a coordination point for ATP.

It belongs to the UPF0200 family.

This Staphylothermus marinus (strain ATCC 43588 / DSM 3639 / JCM 9404 / F1) protein is UPF0200 protein Smar_1234.